The sequence spans 153 residues: Aspartate carbamoyltransferase regulatory chain (153 aa).

Positions 109, 114, 138, and 141 each coordinate Zn(2+).

It belongs to the PyrI family. As to quaternary structure, contains catalytic and regulatory chains. The cofactor is Zn(2+).

Involved in allosteric regulation of aspartate carbamoyltransferase. The polypeptide is Aspartate carbamoyltransferase regulatory chain (Nitrosopumilus maritimus (strain SCM1)).